Reading from the N-terminus, the 360-residue chain is Phospho-N-acetylmuramoyl-pentapeptide-transferase (360 aa).

The next 10 membrane-spanning stretches (helical) occupy residues 26–46, 72–92, 94–114, 132–152, 168–188, 199–219, 236–256, 263–283, 288–308, and 338–358; these read AIVS…RLIA, PTMG…LWAY, SNPY…VGFV, WKYF…YITG, VMPQ…VGTG, GLAI…AWAT, AGEL…FLWF, VFMG…IAVL, FLLV…ILQV, and VIVR…ATLK.

Belongs to the glycosyltransferase 4 family. MraY subfamily. It depends on Mg(2+) as a cofactor.

The protein resides in the cell inner membrane. The catalysed reaction is UDP-N-acetyl-alpha-D-muramoyl-L-alanyl-gamma-D-glutamyl-meso-2,6-diaminopimeloyl-D-alanyl-D-alanine + di-trans,octa-cis-undecaprenyl phosphate = di-trans,octa-cis-undecaprenyl diphospho-N-acetyl-alpha-D-muramoyl-L-alanyl-D-glutamyl-meso-2,6-diaminopimeloyl-D-alanyl-D-alanine + UMP. It functions in the pathway cell wall biogenesis; peptidoglycan biosynthesis. In terms of biological role, catalyzes the initial step of the lipid cycle reactions in the biosynthesis of the cell wall peptidoglycan: transfers peptidoglycan precursor phospho-MurNAc-pentapeptide from UDP-MurNAc-pentapeptide onto the lipid carrier undecaprenyl phosphate, yielding undecaprenyl-pyrophosphoryl-MurNAc-pentapeptide, known as lipid I. This chain is Phospho-N-acetylmuramoyl-pentapeptide-transferase, found in Cronobacter sakazakii (strain ATCC BAA-894) (Enterobacter sakazakii).